Reading from the N-terminus, the 957-residue chain is Glycine dehydrogenase (decarboxylating) (957 aa).

The residue at position 708 (Lys708) is an N6-(pyridoxal phosphate)lysine.

Belongs to the GcvP family. In terms of assembly, the glycine cleavage system is composed of four proteins: P, T, L and H. Pyridoxal 5'-phosphate is required as a cofactor.

It catalyses the reaction N(6)-[(R)-lipoyl]-L-lysyl-[glycine-cleavage complex H protein] + glycine + H(+) = N(6)-[(R)-S(8)-aminomethyldihydrolipoyl]-L-lysyl-[glycine-cleavage complex H protein] + CO2. In terms of biological role, the glycine cleavage system catalyzes the degradation of glycine. The P protein binds the alpha-amino group of glycine through its pyridoxal phosphate cofactor; CO(2) is released and the remaining methylamine moiety is then transferred to the lipoamide cofactor of the H protein. The chain is Glycine dehydrogenase (decarboxylating) from Escherichia coli (strain UTI89 / UPEC).